Here is a 339-residue protein sequence, read N- to C-terminus: 4-dimethylallyltryptophan N-methyltransferase easF (339 aa).

The protein belongs to the methyltransferase superfamily. In terms of assembly, homodimer.

It carries out the reaction 4-(3-methylbut-2-enyl)-L-tryptophan + S-adenosyl-L-methionine = 4-(3-methylbut-2-enyl)-L-abrine + S-adenosyl-L-homocysteine + H(+). It functions in the pathway alkaloid biosynthesis; ergot alkaloid biosynthesis. 4-dimethylallyltryptophan N-methyltransferase; part of the gene cluster that mediates the biosynthesis of fumiclavanine C, a fungal ergot alkaloid. DmaW catalyzes the first step of ergot alkaloid biosynthesis by condensing dimethylallyl diphosphate (DMAP) and tryptophan to form 4-dimethylallyl-L-tryptophan. The second step is catalyzed by the methyltransferase easF that methylates 4-dimethylallyl-L-tryptophan in the presence of S-adenosyl-L-methionine, resulting in the formation of 4-dimethylallyl-L-abrine. The catalase easC and the FAD-dependent oxidoreductase easE then transform 4-dimethylallyl-L-abrine to chanoclavine-I which is further oxidized by EasD in the presence of NAD(+), resulting in the formation of chanoclavine-I aldehyde. EasA reduces chanoclavine-I aldehyde to dihydrochanoclavine-I aldehyde that spontaneously dehydrates to form 6,8-dimethyl-6,7-didehydroergoline. EasG then catalyzes the reduction of 6,8-dimethyl-6,7-didehydroergoline to form festuclavine. Hydrolysis of festuclavine by easM then leads to the formation of fumigaclavine B which is in turn acetylated by easN to fumigaclavine A. Finally, easL catalyzes the conversion of fumigaclavine A into fumigaclavine C by attaching a dimethylallyl moiety to C-2 of the indole nucleus. The protein is 4-dimethylallyltryptophan N-methyltransferase easF of Aspergillus fumigatus (strain ATCC MYA-4609 / CBS 101355 / FGSC A1100 / Af293) (Neosartorya fumigata).